The chain runs to 1210 residues: Microtubule-associated tumor suppressor 1 homolog (1210 aa).

Disordered stretches follow at residues 1–21, 370–404, 446–482, 513–545, and 585–618; these read MNDDNSDRTEDGSRYVFIRDK, DPHIDSHDNDSDIQSSTEELTLRSVSGQRGSPYEM, VENGPRDAKRAPNLKGEPTNMPKPNLGKSATKTNTTV, QPKDTSIMKDTPSPQVTGGSSPSPGPSKHLTMM, and HSKNASLGVPRTTSATKSNQENVDKTGSPHAGSE. Residues 370–379 show a composition bias toward basic and acidic residues; that stretch reads DPHIDSHDND. Residues Ser-375, Ser-380, and Ser-393 each carry the phosphoserine modification. Polar residues predominate over residues 381–398; that stretch reads DIQSSTEELTLRSVSGQR. Over residues 446-455 the composition is skewed to basic and acidic residues; the sequence is VENGPRDAKR. The span at 473–482 shows a compositional bias: polar residues; that stretch reads KSATKTNTTV. Positions 524–534 are enriched in low complexity; that stretch reads PSPQVTGGSSP. A compositionally biased stretch (polar residues) spans 585-605; sequence HSKNASLGVPRTTSATKSNQE. Ser-621 is modified (phosphoserine). Positions 683-771 are disordered; sequence SKSLLVGSAP…YEEKPPKQAF (89 aa). The span at 692 to 702 shows a compositional bias: polar residues; that stretch reads PKTSTTPGRSS. Positions 876-1171 form a coiled coil; the sequence is IQHLLSEREE…RLSMENEELL (296 aa). 9 positions are modified to phosphoserine: Ser-1143, Ser-1164, Ser-1185, Ser-1195, Ser-1199, Ser-1201, Ser-1203, Ser-1204, and Ser-1208. A disordered region spans residues 1177–1210; it reads GDLCSPKRSPTSSAIPFQSPRNSGSFSSPSISPR. The span at 1195-1210 shows a compositional bias: low complexity; it reads SPRNSGSFSSPSISPR.

Belongs to the MTUS1 family. As to quaternary structure, homodimer. Interacts with AGTR2. Interacts with PTPN6. As to expression, ubiquitously expressed, with highest levels in uterus and adrenal gland.

It localises to the mitochondrion. It is found in the golgi apparatus. The protein resides in the cell membrane. The protein localises to the nucleus. Functionally, cooperates with AGTR2 to inhibit ERK2 activation and cell proliferation. May be required for AGTR2 cell surface expression. Together with PTPN6, induces UBE2V2 expression upon angiotensin-II stimulation. The polypeptide is Microtubule-associated tumor suppressor 1 homolog (Mtus1) (Mus musculus (Mouse)).